Consider the following 59-residue polypeptide: U17-myrmicitoxin-Tb1f (59 aa).

The N-terminal stretch at 1–27 (MEKNRTTTFSVYLTIILFLISTFITMV) is a signal peptide. Residues 28-31 (ITES) constitute a propeptide that is removed on maturation. H58 is subject to Histidine amide.

Expressed by the venom gland.

The protein resides in the secreted. The chain is U17-myrmicitoxin-Tb1f from Tetramorium bicarinatum (Tramp ant).